The sequence spans 118 residues: Autophagy-related protein 8 (118 aa).

A lipid anchor (Phosphatidylethanolamine amidated glycine) is attached at Gly116. Residues 117–118 (SI) constitute a propeptide, removed in mature form.

Belongs to the ATG8 family. As to quaternary structure, conjugation to phosphatidylethanolamine (PE) leads to homodimerization. Interacts with ATG1, ATG3, ATG4, ATG7 and ATG12. The C-terminal Ser-117 and Ile-118 residues of ATG8 are removed by ATG4 to expose Gly-116 at the C-terminus. This Gly-116 forms then a thioester bond with ATG7 (E1-like activating enzyme) before being transferred to ATG3 (the specific E2 conjugating enzyme), in order to be finally amidated with phosphatidylethanolamine. This lipid modification anchors ATG8 to membranes and can be reversed by ATG4, releasing soluble ATG8.

Its subcellular location is the cytoplasmic vesicle. The protein resides in the cvt vesicle membrane. It localises to the autophagosome membrane. The protein localises to the vacuole membrane. Its function is as follows. Ubiquitin-like modifier involved in cytoplasm to vacuole transport (Cvt) vesicles and autophagosome formation. With ATG4, mediates the delivery of the vesicles and autophagosomes to the vacuole via the microtubule cytoskeleton. Required for selective autophagic degradation of the nucleus (nucleophagy) as well as for mitophagy which contributes to regulate mitochondrial quantity and quality by eliminating the mitochondria to a basal level to fulfill cellular energy requirements and preventing excess ROS production. Also participates in membrane fusion events that take place in the early secretory pathway. Also involved in endoplasmic reticulum-specific autophagic process and is essential for the survival of cells subjected to severe ER stress. The ATG8-PE conjugate mediates tethering between adjacent membranes and stimulates membrane hemifusion, leading to expansion of the autophagosomal membrane during autophagy. Moreover not only conjugation, but also subsequent ATG8-PE deconjugation is an important step required to facilitate multiple events during macroautophagy, and especially for efficient autophagosome biogenesis, the assembly of ATG9-containing tubulovesicular clusters into phagophores/autophagosomes, and for the disassembly of PAS-associated ATG components. Contributes to conidiation by regulating the conidial levels of the conidiation-related protein CP15 and mediates fungal oxidation resistance by controlling total superoxide dismutase (SOD) activity. This is Autophagy-related protein 8 from Beauveria bassiana (strain ARSEF 2860) (White muscardine disease fungus).